A 502-amino-acid polypeptide reads, in one-letter code: Probable zinc metalloprotease MGG_02107 (502 aa).

Positions 1–21 are cleaved as a signal peptide; the sequence is MRSPPGAVAALASVAAQLATA. Zn(2+)-binding residues include H182, D202, and E235. N-linked (GlcNAc...) asparagine glycosylation is present at N250. A Zn(2+)-binding site is contributed by D262. The tract at residues 284–307 is disordered; that stretch reads QGGSPAGESKERAETRASIGGEND. Residues N375, N417, and N427 are each glycosylated (N-linked (GlcNAc...) asparagine). Residues 414-502 enclose the Fibronectin type-III domain; it reads QVRNVTVDTS…KSPATMPFPG (89 aa).

This sequence belongs to the peptidase M28 family. M28B subfamily. Zn(2+) is required as a cofactor.

It is found in the secreted. The polypeptide is Probable zinc metalloprotease MGG_02107 (Pyricularia oryzae (strain 70-15 / ATCC MYA-4617 / FGSC 8958) (Rice blast fungus)).